The following is a 428-amino-acid chain: BTB/POZ domain-containing protein KCTD16 (428 aa).

One can recognise a BTB domain in the interval 25 to 98 (EVVELNVGGQ…LRDRQVVLPD (74 aa)). Tyr112 carries the phosphotyrosine modification. Residues Ser130, Ser137, Ser143, and Ser146 each carry the phosphoserine modification.

As to quaternary structure, homopentamer; forms an open pentamer. In contrast to other BTB domain-containing proteins, does not interact with CUL3. Interacts as a tetramer with GABRB1 and GABRB2.

The protein resides in the presynaptic cell membrane. It localises to the postsynaptic cell membrane. In terms of biological role, auxiliary subunit of GABA-B receptors that determine the pharmacology and kinetics of the receptor response. Increases agonist potency and markedly alter the G-protein signaling of the receptors by accelerating onset and promoting desensitization. The protein is BTB/POZ domain-containing protein KCTD16 (KCTD16) of Homo sapiens (Human).